Consider the following 425-residue polypeptide: Pleckstrin homology domain-containing family A member 2 (425 aa).

Residues 7-113 (QNRICGFLDI…WVEALNQASK (107 aa)) form the PH 1 domain. Residue K141 forms a Glycyl lysine isopeptide (Lys-Gly) (interchain with G-Cter in SUMO2) linkage. S184 is modified (phosphoserine). In terms of domain architecture, PH 2 spans 198–298 (PLIKSGYCVK…WIEGIGAAVQ (101 aa)). The span at 310 to 331 (SRSISLTRPGSSTLTSAPNSIL) shows a compositional bias: polar residues. The segment at 310-425 (SRSISLTRPG…DDENIRTSDV (116 aa)) is disordered. Residues S314 and S349 each carry the phosphoserine modification. Basic and acidic residues-rich tracts occupy residues 363-375 (AEEK…HAPE) and 400-410 (RSEPQHPKEKP).

Binds MPDZ and PTPN13.

The protein localises to the cytoplasm. Its subcellular location is the cell membrane. The protein resides in the nucleus. Binds specifically to phosphatidylinositol 3,4-diphosphate (PtdIns3,4P2), but not to other phosphoinositides. May recruit other proteins to the plasma membrane. In Mus musculus (Mouse), this protein is Pleckstrin homology domain-containing family A member 2 (Plekha2).